A 347-amino-acid polypeptide reads, in one-letter code: CCN family member 2 (347 aa).

The first 24 residues, 1 to 24 (MLASVAGPVSLALVLLLCTRPATG), serve as a signal peptide directing secretion. Positions 25–96 (QDCSAQCQCA…NRKIGVCTAK (72 aa)) constitute an IGFBP N-terminal domain. Intrachain disulfides connect Cys-27/Cys-52, Cys-31/Cys-54, Cys-33/Cys-55, Cys-41/Cys-58, Cys-66/Cys-80, and Cys-72/Cys-93. The VWFC domain maps to 99-165 (APCVFGGSVY…GKCCEEWVCD (67 aa)). The region spanning 196 to 241 (NCLVQTTEWSACSKTCGMGISTRVTNDNTFCRLEKQSRLCMVRPCE) is the TSP type-1 domain. Residues 245–347 (EENIKKGKKC…YYRKMYGDMA (103 aa)) are heparin-binding. 5 disulfides stabilise this stretch: Cys-254–Cys-291, Cys-271–Cys-305, Cys-282–Cys-321, Cys-285–Cys-323, and Cys-290–Cys-327. In terms of domain architecture, CTCK spans 254–328 (CIRTPKIAKP…KTCACHYNCP (75 aa)).

Belongs to the CCN family. As to quaternary structure, monomer. Interacts with TSKU.

The protein resides in the secreted. It localises to the extracellular space. Its subcellular location is the extracellular matrix. Functionally, major connective tissue mitoattractant secreted by vascular endothelial cells. Promotes proliferation and differentiation of chondrocytes. Is involved in the stimulation of osteoblast differentiation and has a critical role in osteogenesis. Mediates heparin- and divalent cation-dependent cell adhesion in many cell types including fibroblasts, myofibroblasts, endothelial and epithelial cells. Enhances fibroblast growth factor-induced DNA synthesis. The sequence is that of CCN family member 2 from Rattus norvegicus (Rat).